We begin with the raw amino-acid sequence, 114 residues long: Iron-sulfur cluster insertion protein ErpA (114 aa).

Positions 42, 106, and 108 each coordinate iron-sulfur cluster.

It belongs to the HesB/IscA family. Homodimer. It depends on iron-sulfur cluster as a cofactor.

Functionally, required for insertion of 4Fe-4S clusters for at least IspG. This is Iron-sulfur cluster insertion protein ErpA from Cronobacter sakazakii (strain ATCC BAA-894) (Enterobacter sakazakii).